The chain runs to 277 residues: uncharacterized protein (277 aa).

Disordered regions lie at residues 1–103 (PPLR…LEDP) and 254–277 (PSPS…SPPR). Residues 48–65 (RRNDTGKDRGTHRQRAET) are compositionally biased toward basic and acidic residues. Polar residues predominate over residues 66-77 (PSRSPVPTTNTV). The segment covering 82-91 (PAVRRQRRTQ) has biased composition (basic residues).

This is an uncharacterized protein from Homo sapiens (Human).